The chain runs to 833 residues: Transmembrane protease serine 7 (833 aa).

The Cytoplasmic segment spans residues 1–62; the sequence is MDKEKSDPSC…RAPFWNVQNK (62 aa). The interval 30–49 is disordered; sequence KLPGRRLPRKPIGKARPRKQ. Over residues 32–49 the composition is skewed to basic residues; that stretch reads PGRRLPRKPIGKARPRKQ. The helical; Signal-anchor for type II membrane protein transmembrane segment at 63–83 threads the bilayer; the sequence is IILFTVFLFILAVTAWTLLWL. Residues 84-829 are Extracellular-facing; it reads YISKTDSKDA…NFVPWIHKYV (746 aa). The SEA domain occupies 92 to 220; it reads DAFYFVGMFR…DSVVLNAGLR (129 aa). An N-linked (GlcNAc...) asparagine glycan is attached at Asn-196. Disulfide bonds link Cys-233-Cys-259, Cys-285-Cys-312, and Cys-355-Cys-386. 2 CUB domains span residues 233–350 and 355–471; these read CSQY…FEVI and CENT…YNIS. 2 N-linked (GlcNAc...) asparagine glycosylation sites follow: Asn-405 and Asn-469. LDL-receptor class A domains are found at residues 473-509 and 548-585; these read PCPA…LFCV and PCTN…EGCG. 7 disulfides stabilise this stretch: Cys-474/Cys-486, Cys-481/Cys-499, Cys-493/Cys-508, Cys-549/Cys-561, Cys-556/Cys-575, Cys-569/Cys-584, and Cys-621/Cys-637. One can recognise a Peptidase S1 domain in the interval 596–830; the sequence is VVGGSDSQEG…FVPWIHKYVP (235 aa). Residues His-636 and Asp-684 each act as charge relay system in the active site. 3 disulfides stabilise this stretch: Cys-720-Cys-786, Cys-752-Cys-765, and Cys-776-Cys-806. Ser-780 (charge relay system) is an active-site residue.

Belongs to the peptidase S1 family. In terms of assembly, forms a heterodimer with SERPINA5. N-glycosylated.

It localises to the cell membrane. Functionally, serine protease which preferentially hydrolyzes peptides with Arg at the P1 position. The polypeptide is Transmembrane protease serine 7 (Rattus norvegicus (Rat)).